Consider the following 1123-residue polypeptide: MSTPKKTYSSTSSAKSKAHSVRVAQTTADAALQAVFEKSGDSGDSFDYSKSVSKSTAESLPSGAVTAYLQRMQRGGLTQSFGCMIAVEGTGFRVIAYSENAPEILDLVPQAVPSVGEMDTLRIGTDVRTLFTASSVASLEKAAEAQEMSLLNPITVNCRRSGKQLYAIAHRIDIGIVIDFEAVKTDDHLVSAAGALQSHKLAAKAITRLQALPGGDIGLLCDTVVEEVRELTGYDRVMAYRFHEDEHGEVVAEIRRADLEPYLGLHYPGTDIPQASRFLFMKNKVRIIADCSAPPVKVIQDPTLRQPVSLAGSTLRSPHGCHAQYMGNMGSIASLVMAVIINDNEEDSHGSVQRGRKLWGLVVCHHTSPRTVPFPLRSACGFLMQVFGLQLNMEVELAAQLREKHILRTQTLLCDMLLRDAPIGIVSQIPNIMDLVKCDGAALYYGKRFWLLGTTPTESQIKDIAEWLLEYHKDSTGLSTDSLADANYPAAHLLGDAVCGMAAAKITAKDFLFWFRSHTAKEIKWGGAKHDPGEKDDGRKMHPRSSFKAFLEVVKRRSLPWEDVEMDAIHSLQLILRGSFQDIDDSDTKTMIHARLNDLKLHDMDELSVVANEMVRLIETATAPILAVDSNGMINGWNAKIAQVTGLPVSEAMGRSLVKDLVTDESVAVVERLLYLALRGEEEQNVEIKLKTFGTQTEKGVVILIVNACSSRDVSENVVGVCFVGQDVTGQKMFMDKFTRIQGDYKTIVQNPHPLIPPIFGADEFGYCFEWNPAMEGLTGWKKDEVVGKLLVGEIFGMQMMCCRMKSQDAMTKFMIALNTAMDGQSTDKFTFSFFDREGKYVDVLLSTNKRTNADGVITGVFCFLQIASSELQQALKVQRATEKVAVAKLKELAYIRQEIKNPLCGITFTRQLLEDTDLSDDQQQFLDTSAVCEQQLQKVLNDMDLESIEDGYLELDTAEFEMGTVMNAVISQGMTTSREKGLQIFRETPREINTMRLLGDQIRLQQVLSDFLLNTVRFTPSPEGWVKIKVVPTRKRLGGSVHVVHLEFRVSHPGAGLPEELVLEMYDRGKGMTQEGLGLNMCRKLVRLMNGDVHYVREAMQCYFVVNVELPMAQRDDASSQM.

A compositionally biased stretch (low complexity) spans 1 to 15 (MSTPKKTYSSTSSAK). The disordered stretch occupies residues 1 to 20 (MSTPKKTYSSTSSAKSKAHS). Residues 216–395 (DIGLLCDTVV…VFGLQLNMEV (180 aa)) form the GAF domain. Cys-321 lines the phytochromobilin pocket. PAS domains lie at 610–681 (VANE…LRGE) and 744–815 (DYKT…TKFM). The region spanning 895–1115 (YIRQEIKNPL…VVNVELPMAQ (221 aa)) is the Histidine kinase domain.

Belongs to the phytochrome family. As to quaternary structure, homodimer. In terms of processing, contains one covalently linked phytochromobilin chromophore.

It is found in the cytoplasm. In terms of biological role, regulatory photoreceptor which exists in two forms that are reversibly interconvertible by light: the Pr form that absorbs maximally in the red region of the spectrum and the Pfr form that absorbs maximally in the far-red region. Photoconversion of Pr to Pfr induces an array of morphogenetic responses, whereas reconversion of Pfr to Pr cancels the induction of those responses. Pfr controls the expression of a number of nuclear genes including those encoding the small subunit of ribulose-bisphosphate carboxylase, chlorophyll A/B binding protein, protochlorophyllide reductase, rRNA, etc. It also controls the expression of its own gene(s) in a negative feedback fashion. Mediates chloroplast avoidance movement in cytoplasm. This is Phytochrome 1 (PHY1) from Physcomitrium patens (Spreading-leaved earth moss).